The sequence spans 266 residues: Putative carbamate hydrolase RutD (266 aa).

It belongs to the AB hydrolase superfamily. Hydrolase RutD family.

The enzyme catalyses carbamate + 2 H(+) = NH4(+) + CO2. Involved in pyrimidine catabolism. May facilitate the hydrolysis of carbamate, a reaction that can also occur spontaneously. In Escherichia coli O127:H6 (strain E2348/69 / EPEC), this protein is Putative carbamate hydrolase RutD.